A 411-amino-acid polypeptide reads, in one-letter code: Ornithine aminotransferase (411 aa).

Lysine 257 carries the post-translational modification N6-(pyridoxal phosphate)lysine.

It belongs to the class-III pyridoxal-phosphate-dependent aminotransferase family. OAT subfamily. It depends on pyridoxal 5'-phosphate as a cofactor.

It is found in the cytoplasm. It carries out the reaction a 2-oxocarboxylate + L-ornithine = L-glutamate 5-semialdehyde + an L-alpha-amino acid. It participates in amino-acid biosynthesis; L-proline biosynthesis; L-glutamate 5-semialdehyde from L-ornithine: step 1/1. Its function is as follows. Catalyzes the interconversion of ornithine to glutamate semialdehyde. The chain is Ornithine aminotransferase from Bordetella bronchiseptica (strain ATCC BAA-588 / NCTC 13252 / RB50) (Alcaligenes bronchisepticus).